A 715-amino-acid chain; its full sequence is Scinderin (715 aa).

The interval Met-1–Glu-363 is actin-severing. A Gelsolin-like 1 repeat occupies Leu-27–Thr-76. At Tyr-102 the chain carries Phosphotyrosine. A 1,2-diacyl-sn-glycero-3-phospho-(1D-myo-inositol-4,5-bisphosphate)-binding positions include Lys-112 to Ala-119 and Arg-138 to Arg-146. 4 Gelsolin-like repeats span residues Val-148–Leu-188, Val-265–Lys-307, Val-398–Thr-451, and Thr-523–Lys-564. The interval Lys-364–Trp-715 is ca(2+)-dependent actin binding. The Ca(2+) site is built by Asn-538, Asp-539, and Glu-562. A Phosphotyrosine modification is found at Tyr-599. The Gelsolin-like 6 repeat unit spans residues Phe-626–Lys-668. The Ca(2+) site is built by Asp-643, Asp-644, and Glu-666.

This sequence belongs to the villin/gelsolin family. As to expression, expressed in megakaryocytes.

It is found in the cytoplasm. The protein resides in the cytoskeleton. It localises to the cell projection. The protein localises to the podosome. Ca(2+)-dependent actin filament-severing protein that has a regulatory function in exocytosis by affecting the organization of the microfilament network underneath the plasma membrane. Severing activity is inhibited by phosphatidylinositol 4,5-bis-phosphate (PIP2). In vitro, also has barbed end capping and nucleating activities in the presence of Ca(2+). Required for megakaryocyte differentiation, maturation, polyploidization and apoptosis with the release of platelet-like particles. Plays a role in osteoclastogenesis (OCG) and actin cytoskeletal organization in osteoclasts. Regulates chondrocyte proliferation and differentiation. Inhibits cell proliferation and tumorigenesis. Signaling is mediated by MAPK, p38 and JNK pathways. The protein is Scinderin of Homo sapiens (Human).